The sequence spans 432 residues: Short/branched chain specific acyl-CoA dehydrogenase, mitochondrial (432 aa).

Residues 1 to 33 constitute a mitochondrion transit peptide; that stretch reads MEGLAVRLLRGSRLLRRNFPTCLSSWKIPPHVS. Residue Lys70 is modified to N6-acetyllysine; alternate. Lys70 carries the N6-succinyllysine; alternate modification. Residues 174–183 and 207–209 each bind FAD; these read FCLSEAGAGS and WIS. Ser183 serves as a coordination point for substrate. The residue at position 183 (Ser183) is a Phosphoserine. Tyr229 and Tyr283 together coordinate substrate. Lys284 bears the N6-acetyllysine; alternate mark. At Lys284 the chain carries N6-succinyllysine; alternate. Residue 291–294 participates in substrate binding; it reads NEGR. FAD-binding positions include Arg319, Gln330, and 387 to 391; that span reads EWMGG. Glu414 serves as the catalytic Proton acceptor. 416 to 418 serves as a coordination point for FAD; the sequence is ASN. The residue at position 426 (Lys426) is an N6-acetyllysine.

It belongs to the acyl-CoA dehydrogenase family. In terms of assembly, homotetramer. FAD serves as cofactor.

The protein localises to the mitochondrion matrix. The catalysed reaction is 2-methylbutanoyl-CoA + oxidized [electron-transfer flavoprotein] + H(+) = (2E)-2-methylbut-2-enoyl-CoA + reduced [electron-transfer flavoprotein]. It carries out the reaction (2S)-2-methylbutanoyl-CoA + oxidized [electron-transfer flavoprotein] + H(+) = (2E)-2-methylbut-2-enoyl-CoA + reduced [electron-transfer flavoprotein]. It catalyses the reaction (2R)-2-methylbutanoyl-CoA + oxidized [electron-transfer flavoprotein] + H(+) = ethylacryloyl-CoA + reduced [electron-transfer flavoprotein]. The enzyme catalyses butanoyl-CoA + oxidized [electron-transfer flavoprotein] + H(+) = (2E)-butenoyl-CoA + reduced [electron-transfer flavoprotein]. The catalysed reaction is 2-methylpropanoyl-CoA + oxidized [electron-transfer flavoprotein] + H(+) = 2-methylpropenoyl-CoA + reduced [electron-transfer flavoprotein]. It carries out the reaction hexanoyl-CoA + oxidized [electron-transfer flavoprotein] + H(+) = (2E)-hexenoyl-CoA + reduced [electron-transfer flavoprotein]. It catalyses the reaction valproyl-CoA + oxidized [electron-transfer flavoprotein] + H(+) = (2E)-2-propylpent-2-enoyl-CoA + reduced [electron-transfer flavoprotein]. Its pathway is lipid metabolism; mitochondrial fatty acid beta-oxidation. The protein operates within amino-acid degradation; L-isoleucine degradation. Its function is as follows. Short and branched chain specific acyl-CoA dehydrogenase that catalyzes the removal of one hydrogen from C-2 and C-3 of the fatty acyl-CoA thioester, resulting in the formation of trans-2-enoyl-CoA. Among the different mitochondrial acyl-CoA dehydrogenases, acts specifically on short and branched chain acyl-CoA derivatives such as (S)-2-methylbutyryl-CoA as well as short straight chain acyl-CoAs such as butyryl-CoA. Plays an important role in the metabolism of L-isoleucine by catalyzing the dehydrogenation of 2-methylbutyryl-CoA, one of the steps of the L-isoleucine catabolic pathway. Can also act on valproyl-CoA, a metabolite of the valproic acid drug. The chain is Short/branched chain specific acyl-CoA dehydrogenase, mitochondrial (ACADSB) from Pongo abelii (Sumatran orangutan).